The following is a 292-amino-acid chain: 33 kDa chaperonin (292 aa).

2 disulfide bridges follow: cysteine 230–cysteine 232 and cysteine 263–cysteine 266.

Belongs to the HSP33 family. Post-translationally, under oxidizing conditions two disulfide bonds are formed involving the reactive cysteines. Under reducing conditions zinc is bound to the reactive cysteines and the protein is inactive.

The protein resides in the cytoplasm. Redox regulated molecular chaperone. Protects both thermally unfolding and oxidatively damaged proteins from irreversible aggregation. Plays an important role in the bacterial defense system toward oxidative stress. The protein is 33 kDa chaperonin of Salmonella typhimurium (strain LT2 / SGSC1412 / ATCC 700720).